The sequence spans 516 residues: Protein P54 (516 aa).

Positions Met-1–Ala-27 are cleaved as a signal peptide. The interval Ala-208–Ser-397 is disordered. The span at Ala-210–Arg-236 shows a compositional bias: basic and acidic residues. Composition is skewed to low complexity over residues Leu-237–Gln-247 and Gln-257–Pro-380. A compositionally biased stretch (pro residues) spans Ala-381–Asn-395. The region spanning Ser-399–Met-516 is the NlpC/P60 domain. Residue Cys-429 is the Nucleophile of the active site. Catalysis depends on His-480, which acts as the Proton acceptor. The active site involves His-492.

Belongs to the peptidase C40 family.

The protein resides in the secreted. It is found in the cell wall. The protein is Protein P54 of Enterococcus faecium (Streptococcus faecium).